An 89-amino-acid polypeptide reads, in one-letter code: Small ribosomal subunit protein uS15 (89 aa).

The protein belongs to the universal ribosomal protein uS15 family. As to quaternary structure, part of the 30S ribosomal subunit. Forms a bridge to the 50S subunit in the 70S ribosome, contacting the 23S rRNA.

In terms of biological role, one of the primary rRNA binding proteins, it binds directly to 16S rRNA where it helps nucleate assembly of the platform of the 30S subunit by binding and bridging several RNA helices of the 16S rRNA. Functionally, forms an intersubunit bridge (bridge B4) with the 23S rRNA of the 50S subunit in the ribosome. This is Small ribosomal subunit protein uS15 from Solibacter usitatus (strain Ellin6076).